Consider the following 471-residue polypeptide: Reticulon-2 (471 aa).

Disordered stretches follow at residues 1 to 137 (MGQV…ERPL), 153 to 181 (SAGS…ASEA), and 205 to 234 (QLSP…DDEP). Positions 14-25 (APSTASSTPDST) are enriched in low complexity. Positions 32–43 (SDFRELHTAREF) are enriched in basic and acidic residues. Residue Ser44 is modified to Phosphoserine. Polar residues-rich tracts occupy residues 100–118 (PQQS…LSQS) and 159–168 (DSATSSSTPL). Positions 169 to 181 (ENEEPDGLEASEA) are enriched in acidic residues. Residues 205–229 (QLSPSSGTPQAHTPSPQRSQDSNSG) show a composition bias toward polar residues. Residues Ser226 and Ser228 each carry the phosphoserine modification. Residues 272–471 (VADLLYWKDT…SVSGSKAKAE (200 aa)) enclose the Reticulon domain. Helical transmembrane passes span 295–315 (LLCL…LLGL) and 390–410 (LLFY…LVIL).

In terms of assembly, interacts with SPAST. Interacts with BACE1. Interacts (via first transmembrane domain) with ARL6IP5/GTRAP3-18. Interacts (via N-terminus) with SLC1A1/EAAC1; the interaction promotes cell surface expression of SLC1A1. In terms of tissue distribution, detected in skeletal and cardiac muscle (at protein level). Expressed predominantly in neural and muscular tissues.

It is found in the endoplasmic reticulum membrane. Its subcellular location is the sarcoplasmic reticulum membrane. It localises to the cell membrane. The protein localises to the sarcolemma. The protein resides in the T-tubule. It is found in the cytoplasm. Its subcellular location is the myofibril. It localises to the sarcomere. The protein localises to the z line. The protein resides in the cytoskeleton. Functionally, inhibits amyloid precursor protein processing, probably by blocking BACE1 activity. Enhances trafficking of the glutamate transporter SLC1A1/EAAC1 from the endoplasmic reticulum to the cell surface. Plays a role in the translocation of SLC2A4/GLUT4 from intracellular membranes to the cell membrane which facilitates the uptake of glucose into the cell. In Mus musculus (Mouse), this protein is Reticulon-2.